Reading from the N-terminus, the 200-residue chain is Transcription factor FapR (200 aa).

It belongs to the FapR family.

Functionally, transcriptional factor involved in regulation of membrane lipid biosynthesis by repressing genes involved in fatty acid and phospholipid metabolism. The chain is Transcription factor FapR from Thermoanaerobacter pseudethanolicus (strain ATCC 33223 / 39E) (Clostridium thermohydrosulfuricum).